A 368-amino-acid chain; its full sequence is MISDQTHMRRCLTLAKTAIGKTAPNPLVGSVIVQGDEIVGQGFHPQAGQPHGEIFALWEAGDRAKGATLYVNLEPCNHQGRTPPCTEAIIQAGIAKVVVGMVDPNPLVAGKGISRLRQAGIEVKVGVEEEACQRLNEAFCFRIKHQRPFGIFKYAMTLDGKIATAQAHSSWVTSSSARHWVHQLRSQCQAVIIGGNTVRRDNPLLTNHGVGEVNPLRVVLSRSLDLPIEAQLWDQDVAKTLVITEKTCDRNTLSHLEKLEVETLVLEQLTPLAVMEELYQRNCLQVLWECGGILAAEAIAMGTVQKVHAFLAPKIIGGVAAPTPVGELGFQQMTQALNLTDLHCQAIGPDWLFTGYLCGNDDNGQSNI.

A deaminase region spans residues 1-146; the sequence is MISDQTHMRR…EAFCFRIKHQ (146 aa). The region spanning 2–124 is the CMP/dCMP-type deaminase domain; that stretch reads ISDQTHMRRC…RLRQAGIEVK (123 aa). Histidine 51 contacts Zn(2+). Glutamate 53 serves as the catalytic Proton donor. Cysteine 76 and cysteine 85 together coordinate Zn(2+). Residues 147–368 are reductase; the sequence is RPFGIFKYAM…GNDDNGQSNI (222 aa). NADP(+) is bound at residue alanine 155. Serine 169 is a binding site for substrate. Tryptophan 171 serves as a coordination point for NADP(+). Arginine 185 lines the substrate pocket. Residues threonine 197 and aspartate 201 each contribute to the NADP(+) site. Substrate contacts are provided by leucine 205 and glutamate 289. 291-297 contributes to the NADP(+) binding site; the sequence is GGILAAE.

This sequence in the N-terminal section; belongs to the cytidine and deoxycytidylate deaminase family. In the C-terminal section; belongs to the HTP reductase family. Zn(2+) is required as a cofactor.

It catalyses the reaction 2,5-diamino-6-hydroxy-4-(5-phosphoribosylamino)-pyrimidine + H2O + H(+) = 5-amino-6-(5-phospho-D-ribosylamino)uracil + NH4(+). The catalysed reaction is 5-amino-6-(5-phospho-D-ribitylamino)uracil + NADP(+) = 5-amino-6-(5-phospho-D-ribosylamino)uracil + NADPH + H(+). Its pathway is cofactor biosynthesis; riboflavin biosynthesis; 5-amino-6-(D-ribitylamino)uracil from GTP: step 2/4. It participates in cofactor biosynthesis; riboflavin biosynthesis; 5-amino-6-(D-ribitylamino)uracil from GTP: step 3/4. Its function is as follows. Converts 2,5-diamino-6-(ribosylamino)-4(3h)-pyrimidinone 5'-phosphate into 5-amino-6-(ribosylamino)-2,4(1h,3h)-pyrimidinedione 5'-phosphate. The protein is Riboflavin biosynthesis protein RibD (ribD) of Synechocystis sp. (strain ATCC 27184 / PCC 6803 / Kazusa).